Here is a 388-residue protein sequence, read N- to C-terminus: Mannitol-1-phosphate 5-dehydrogenase (388 aa).

NAD(+) is bound at residue 4–15 (AVHFGAGNIGRG).

Belongs to the mannitol dehydrogenase family.

It catalyses the reaction D-mannitol 1-phosphate + NAD(+) = beta-D-fructose 6-phosphate + NADH + H(+). This is Mannitol-1-phosphate 5-dehydrogenase from Lactococcus lactis subsp. cremoris (strain MG1363).